Consider the following 456-residue polypeptide: Cysteine--tRNA ligase (456 aa).

Cysteine 30 lines the Zn(2+) pocket. The 'HIGH' region motif lies at 32 to 42; sequence MTVYDFCHIGH. Zn(2+)-binding residues include cysteine 211, histidine 236, and glutamate 240. The 'KMSKS' region signature appears at 268 to 272; sequence KMSKS. Position 271 (lysine 271) interacts with ATP.

Belongs to the class-I aminoacyl-tRNA synthetase family. In terms of assembly, monomer. Zn(2+) serves as cofactor.

The protein resides in the cytoplasm. The enzyme catalyses tRNA(Cys) + L-cysteine + ATP = L-cysteinyl-tRNA(Cys) + AMP + diphosphate. This is Cysteine--tRNA ligase from Dichelobacter nodosus (strain VCS1703A).